Consider the following 532-residue polypeptide: Protein DETOXIFICATION 51 (532 aa).

The next 12 helical transmembrane spans lie at phenylalanine 65 to leucine 85, leucine 98 to methionine 118, valine 142 to isoleucine 162, alanine 176 to isoleucine 196, proline 208 to valine 228, valine 238 to tryptophan 258, valine 290 to valine 310, valine 316 to leucine 336, leucine 358 to alanine 378, isoleucine 395 to proline 415, alanine 439 to phenylalanine 459, and glycine 461 to valine 481.

Belongs to the multi antimicrobial extrusion (MATE) (TC 2.A.66.1) family. In terms of tissue distribution, expressed in the meristematic regions. Mainly detected in tissues where cells were actively dividing, such as leaf primordia and young leaves, the junction between lateral root and the primary root, root cap, hydathodes, the junction between secondary inflorescence and the main inflorescence, young stamen and young siliques. Highly expressed at the junction between the hypocotyl and the root, and at the marginal areas of cotyledons and true leaves, coinciding with the locations of the hydathode. Also highly expressed at the basal regions of the newly emerged lateral roots. In the floral organs, mostly expressed at the style of the pistil.

Its subcellular location is the endosome membrane. The protein resides in the late endosome membrane. Functionally, functions as a multidrug and toxin extrusion transporter that negatively regulates plant disease resistance. Plays an important role in maintaining normal plant architecture, possibly by regulating local auxin biosynthesis. May act as a negative regulator of hypocotyl cell elongation in the light. The polypeptide is Protein DETOXIFICATION 51 (Arabidopsis thaliana (Mouse-ear cress)).